The chain runs to 365 residues: Glucan endo-1,3-beta-glucosidase, basic vacuolar isoform (365 aa).

Residues 1-32 (MSTLHKHNTPQMAAITLLGLLLVASSIEIAGA) form the signal peptide. Glutamate 128 (proton donor) is an active-site residue. The active-site Nucleophile is the glutamate 273. Positions 349-365 (VSGSVETNATASLISEI) are cleaved as a propeptide — removed in mature form. Residue asparagine 356 is glycosylated (N-linked (GlcNAc...) asparagine).

The protein belongs to the glycosyl hydrolase 17 family.

It is found in the vacuole. The catalysed reaction is Hydrolysis of (1-&gt;3)-beta-D-glucosidic linkages in (1-&gt;3)-beta-D-glucans.. Implicated in the defense of plants against pathogens. The protein is Glucan endo-1,3-beta-glucosidase, basic vacuolar isoform (GN2) of Nicotiana plumbaginifolia (Leadwort-leaved tobacco).